The primary structure comprises 593 residues: Potassium channel KAT6 (593 aa).

Residues methionine 1 to arginine 33 are Cytoplasmic-facing. The helical transmembrane segment at tryptophan 34–leucine 54 threads the bilayer. At alanine 55 to leucine 64 the chain is on the extracellular side. The chain crosses the membrane as a helical span at residues alanine 65 to valine 85. The Cytoplasmic portion of the chain corresponds to alanine 86–histidine 106. Residues leucine 107–valine 129 form a helical membrane-spanning segment. At serine 130–glycine 138 the chain is on the extracellular side. A helical; Voltage-sensor membrane pass occupies residues leucine 139–glutamate 159. At lysine 160–lysine 173 the chain is on the cytoplasmic side. The chain crosses the membrane as a helical span at residues leucine 174 to phenylalanine 194. The Extracellular segment spans residues histidine 195–threonine 221. The pore-forming intramembrane region spans cysteine 222 to alanine 241. Over alanine 242 to methionine 247 the chain is Extracellular. Residues leucine 248 to isoleucine 268 traverse the membrane as a helical segment. Residues threonine 269–tryptophan 593 are Cytoplasmic-facing. Leucine 350–tyrosine 470 contributes to the a nucleoside 3',5'-cyclic phosphate binding site. The KHA domain occupies arginine 522 to tryptophan 593.

The protein belongs to the potassium channel family. Plant (TC 1.A.1.4) subfamily.

It is found in the membrane. In terms of biological role, probable inward-rectifying potassium channel. Assuming opened or closed conformations in response to the voltage difference across the membrane, the channel is activated by hyperpolarization. The chain is Potassium channel KAT6 from Oryza sativa subsp. japonica (Rice).